Consider the following 270-residue polypeptide: Glucan endo-1,3-beta-glucosidase (270 aa).

Residues 1–18 (MNAFTFPLLLAFCAFAHG) form the signal peptide. Positions 22-270 (LDWEDEFNGG…VEYVKKWTWN (249 aa)) constitute a GH16 domain. Residue glutamate 137 is the Nucleophile of the active site. Catalysis depends on glutamate 142, which acts as the Proton donor.

Belongs to the glycosyl hydrolase 16 family.

The protein resides in the secreted. It catalyses the reaction Hydrolysis of (1-&gt;3)-beta-D-glucosidic linkages in (1-&gt;3)-beta-D-glucans.. Its activity is regulated as follows. Ca(2+) does not affect the enzyme activity nor the thermostability. Other cations, such as Mg(2+), Mn(2+), Cu(2+), Zn(2+), Ag(+) or Hg(2+) do not cause any serious adverse effect on the activity. Also no significant change in the activity in response to the addition of 1 mM EDTA. Hydrolyzes laminarin majorily to glucose (G1), laminaribiose (L2), laminaritriose (L3), laminaritetraose (L4) and laminaripentaose (L5). Hydrolyzes laminarioligosaccharides L3, L4, L5 and laminarihexaose (L6) to G1, L2 and L3. Hardly hydrolyzes L2. Does not hydrolyze lichenan, pustulan, carboxymethyl cellulose, locust bean gum or soluble starch. This chain is Glucan endo-1,3-beta-glucosidase, found in Cryptopygus antarcticus (Antarctic springtail).